Here is a 379-residue protein sequence, read N- to C-terminus: Cobalt-precorrin-5B C(1)-methyltransferase (379 aa).

It belongs to the CbiD family.

It catalyses the reaction Co-precorrin-5B + S-adenosyl-L-methionine = Co-precorrin-6A + S-adenosyl-L-homocysteine. It participates in cofactor biosynthesis; adenosylcobalamin biosynthesis; cob(II)yrinate a,c-diamide from sirohydrochlorin (anaerobic route): step 6/10. Its function is as follows. Catalyzes the methylation of C-1 in cobalt-precorrin-5B to form cobalt-precorrin-6A. This chain is Cobalt-precorrin-5B C(1)-methyltransferase, found in Cyanothece sp. (strain PCC 7425 / ATCC 29141).